The sequence spans 211 residues: Ferritin heavy chain (211 aa).

A signal peptide spans 1–20 (MKAVLFAVAALLAVCIPISA). One can recognise a Ferritin-like diiron domain in the interval 35 to 191 (ITMQQSCRGS…GKASTLKKML (157 aa)). Cys41 and Cys150 are disulfide-bonded. Fe cation is bound by residues Glu52, Glu87, His90, Glu136, and Gln173.

It belongs to the ferritin family. In terms of assembly, oligomer of 12 light (L) chains and 12 heavy (H) chains; L and H chains are disulfide-linked. The functional molecule forms a roughly spherical shell with a diameter of 12 nm and contains a central cavity into which the insoluble ferric iron core is deposited.

It localises to the golgi apparatus. It is found in the secreted. The catalysed reaction is 4 Fe(2+) + O2 + 4 H(+) = 4 Fe(3+) + 2 H2O. In terms of biological role, stores iron in a soluble, non-toxic, readily available form. Important for iron homeostasis. Iron is taken up in the ferrous form and deposited as ferric hydroxides after oxidation. Ferritin is composed of a heavy (H) chain which is responsible for the oxidation and uptake of ferrous iron, and a light (L) chain which facilitates the nucleation of the ferrihydrite iron core. In Papilio xuthus (Asian swallowtail butterfly), this protein is Ferritin heavy chain.